A 545-amino-acid polypeptide reads, in one-letter code: CTP synthase (545 aa).

The segment at 1-266 (MTTRYIFVTG…DELVIKRFNI (266 aa)) is amidoligase domain. Residue Ser14 coordinates CTP. Position 14 (Ser14) interacts with UTP. ATP is bound by residues 15 to 20 (SLGKGI) and Asp72. Residues Asp72 and Glu140 each coordinate Mg(2+). CTP contacts are provided by residues 147-149 (DIE), 187-192 (KTKPTQ), and Lys223. UTP is bound by residues 187–192 (KTKPTQ) and Lys223. An ATP-binding site is contributed by 239–241 (KDV). Residues 291-542 (TIGMVGKYIE…IAASLSHQKR (252 aa)) form the Glutamine amidotransferase type-1 domain. Gly352 is a binding site for L-glutamine. Cys379 acts as the Nucleophile; for glutamine hydrolysis in catalysis. L-glutamine is bound by residues 380–383 (LGMQ), Glu403, and Arg470. Residues His515 and Glu517 contribute to the active site.

It belongs to the CTP synthase family. Homotetramer.

The enzyme catalyses UTP + L-glutamine + ATP + H2O = CTP + L-glutamate + ADP + phosphate + 2 H(+). It carries out the reaction L-glutamine + H2O = L-glutamate + NH4(+). It catalyses the reaction UTP + NH4(+) + ATP = CTP + ADP + phosphate + 2 H(+). The protein operates within pyrimidine metabolism; CTP biosynthesis via de novo pathway; CTP from UDP: step 2/2. Allosterically activated by GTP, when glutamine is the substrate; GTP has no effect on the reaction when ammonia is the substrate. The allosteric effector GTP functions by stabilizing the protein conformation that binds the tetrahedral intermediate(s) formed during glutamine hydrolysis. Inhibited by the product CTP, via allosteric rather than competitive inhibition. Its function is as follows. Catalyzes the ATP-dependent amination of UTP to CTP with either L-glutamine or ammonia as the source of nitrogen. Regulates intracellular CTP levels through interactions with the four ribonucleotide triphosphates. This Shewanella denitrificans (strain OS217 / ATCC BAA-1090 / DSM 15013) protein is CTP synthase.